Reading from the N-terminus, the 89-residue chain is Small ribosomal subunit protein uS19 (89 aa).

Belongs to the universal ribosomal protein uS19 family.

Functionally, protein S19 forms a complex with S13 that binds strongly to the 16S ribosomal RNA. The polypeptide is Small ribosomal subunit protein uS19 (Bacteroides thetaiotaomicron (strain ATCC 29148 / DSM 2079 / JCM 5827 / CCUG 10774 / NCTC 10582 / VPI-5482 / E50)).